A 242-amino-acid polypeptide reads, in one-letter code: tRNA pseudouridine synthase A (242 aa).

Residue D51 is the Nucleophile of the active site. Y107 serves as a coordination point for substrate.

Belongs to the tRNA pseudouridine synthase TruA family. In terms of assembly, homodimer.

It carries out the reaction uridine(38/39/40) in tRNA = pseudouridine(38/39/40) in tRNA. Functionally, formation of pseudouridine at positions 38, 39 and 40 in the anticodon stem and loop of transfer RNAs. In Helicobacter pylori (strain Shi470), this protein is tRNA pseudouridine synthase A.